Reading from the N-terminus, the 314-residue chain is Lysophospholipase D GDPD1 (314 aa).

Topologically, residues 1–3 (MSS) are extracellular. The chain crosses the membrane as a helical span at residues 4–24 (TAAFYLLSTLGGYLVTSFLLL). The Cytoplasmic portion of the chain corresponds to 25–195 (KYPTLLHQRK…VEKCYKENSD (171 aa)). One can recognise a GP-PDE domain in the interval 40–309 (SKHISHRGGA…DYPTKLRDFL (270 aa)). A divalent metal cation-binding residues include E72, D74, and H87. A helical membrane pass occupies residues 196–216 (IPILFSLQRVLLILGLFFTGL). Over 217–314 (LPFVPIREQF…LRDFLHNFSA (98 aa)) the chain is Extracellular.

This sequence belongs to the glycerophosphoryl diester phosphodiesterase family. In terms of tissue distribution, widely expressed with high expression level in testis.

The protein localises to the cytoplasm. It is found in the membrane. Its subcellular location is the perinuclear region. The protein resides in the endoplasmic reticulum. The enzyme catalyses a 1-O-alkyl-sn-glycero-3-phosphocholine + H2O = a 1-O-alkyl-sn-glycero-3-phosphate + choline + H(+). The catalysed reaction is 1-hexadecanoyl-sn-glycero-3-phosphocholine + H2O = 1-hexadecanoyl-sn-glycero-3-phosphate + choline + H(+). It carries out the reaction N-hexadecanoyl-sn-glycero-3-phosphoethanolamine + H2O = N-hexadecanoylethanolamine + sn-glycerol 3-phosphate + H(+). It catalyses the reaction N-(5Z,8Z,11Z,14Z-eicosatetraenoyl)-1-(9Z-octadecenoyl)-sn-glycero-3-phosphoethanolamine + H2O = N-(5Z,8Z,11Z,14Z-eicosatetraenoyl)-ethanolamine + 1-(9Z-octadecenoyl)-sn-glycero-3-phosphate + H(+). The enzyme catalyses N,1-di-(9Z-octadecenoyl)-sn-glycero-3-phosphoethanolamine + H2O = N-(9Z-octadecenoyl) ethanolamine + 1-(9Z-octadecenoyl)-sn-glycero-3-phosphate + H(+). The catalysed reaction is N-hexadecanoyl-1-(9Z-octadecenoyl)-sn-glycero-3-phosphoethanolamine + H2O = N-hexadecanoylethanolamine + 1-(9Z-octadecenoyl)-sn-glycero-3-phosphate + H(+). It carries out the reaction 1-O-(1Z-octadecenyl)-sn-glycero-3-phospho-N-hexadecanoyl-ethanolamine + H2O = 1-O-(1Z-octadecenyl)-sn-glycero-3-phosphate + N-hexadecanoylethanolamine + H(+). It catalyses the reaction 1-hexadecanoyl-sn-glycero-3-phosphoethanolamine + H2O = 1-hexadecanoyl-sn-glycero-3-phosphate + ethanolamine + H(+). The enzyme catalyses 1-O-hexadecyl-sn-glycero-3-phosphocholine + H2O = 1-O-hexadecyl-sn-glycero-3-phosphate + choline + H(+). The catalysed reaction is 1-(9Z-octadecenoyl)-sn-glycero-3-phosphocholine + H2O = 1-(9Z-octadecenoyl)-sn-glycero-3-phosphate + choline + H(+). It carries out the reaction N,1-dihexadecanoyl-sn-glycero-3-phosphoethanolamine + H2O = N-hexadecanoylethanolamine + 1-hexadecanoyl-sn-glycero-3-phosphate + H(+). It catalyses the reaction 1-O-(1Z-octadecenyl)-sn-glycero-3-phospho-(N-5Z,8Z,11Z,14Z-eicosatetraenoyl)-ethanolamine + H2O = 1-O-(1Z-octadecenyl)-sn-glycero-3-phosphate + N-(5Z,8Z,11Z,14Z-eicosatetraenoyl)-ethanolamine + H(+). The enzyme catalyses 1-O-(1Z-octadecenyl)-sn-glycero-3-phospho-(N-9Z-octadecenoyl)-ethanolamine + H2O = 1-O-(1Z-octadecenyl)-sn-glycero-3-phosphate + N-(9Z-octadecenoyl) ethanolamine + H(+). Its activity is regulated as follows. Lysophospholipase D activity is increased by magnesium and manganese and inhibited by calcium in a concentration dependent manner. Loss of lysophospholipase D activity by addition of EDTA. Its function is as follows. Hydrolyzes lysoglycerophospholipids to produce lysophosphatidic acid (LPA) and the corresponding amines. Shows a preference for 1-O-alkyl-sn-glycero-3-phosphocholine (lyso-PAF), lysophosphatidylethanolamine (lyso-PE) and lysophosphatidylcholine (lyso-PC). May be involved in bioactive N-acylethanolamine biosynthesis from both N-acyl-lysoplasmenylethanolamin (N-acyl-lysoPlsEt) and N-acyl-lysophosphatidylethanolamin (N-acyl-lysoPE). In addition, hydrolyzes glycerophospho-N-acylethanolamine to N-acylethanolamine. Does not display glycerophosphodiester phosphodiesterase activity, since it cannot hydrolyze either glycerophosphoinositol or glycerophosphocholine. In Homo sapiens (Human), this protein is Lysophospholipase D GDPD1.